The sequence spans 156 residues: Ribosomal RNA large subunit methyltransferase H (156 aa).

S-adenosyl-L-methionine contacts are provided by residues Leu73, Gly104, and 123-128; that span reads LSPLTM.

The protein belongs to the RNA methyltransferase RlmH family. Homodimer.

The protein resides in the cytoplasm. The enzyme catalyses pseudouridine(1915) in 23S rRNA + S-adenosyl-L-methionine = N(3)-methylpseudouridine(1915) in 23S rRNA + S-adenosyl-L-homocysteine + H(+). Functionally, specifically methylates the pseudouridine at position 1915 (m3Psi1915) in 23S rRNA. The polypeptide is Ribosomal RNA large subunit methyltransferase H (Proteus mirabilis (strain HI4320)).